The chain runs to 615 residues: MAEPLVLNSVIGFGGAIENGLIAHPDGRTIIYPLGSTIVLRDRADPRSQEFLQGHSDKVSCLALSRSGRYLASGQITYMGFTADIIIWDLESKQLIHRMALHKVKVQALDFSCDERFLASLGGQDDNALVLWDVASGNAICGSPCNTNFTNCVKFFNNSPDKLITAGNFNMNVWTYDAGNNKLRPTDATLGTLKRVFKSVVVDANDEYAYCGTTTGDVLQIALERVLFKNTGPAKGNVQMGVTATCEVPTGDILVGGGDGSLQLLRKMPALAGTKVEGAITSIALADMNARGFTFFVGTAMCNIYKPATSRLKEELVQTAHNDKINGMAFPNEYSEVFATCGTGFIRLWHLTTCRELLRIAVPNLECFCIAFTTDGSAILSGWSDGKIRAFGPQSGKIIFTINDAHQKAVTAIASTADSSRILSGGEEGMVRVWRIGRTSQTLEASMKDHKGPVNCIRIKGSGDECVSASSDGSCILWDLHTFKRRTSLFANTFFKSVVYHPDESQLVTAGTDRKVTYWDAYDGNAIRIIDGSDLDEVNALAVDRDGEALVSGGGDKLVKLWGYDEGHCYFVGVAHSGAITAVGVTPDKQRIVSVGTEGGIFIWDYQRPQTLADI.

WD repeat units follow at residues 54–98 (GHSD…LIHR), 101–142 (LHKV…AICG), 145–184 (CNTNFTNCVKFFNNSPDKLITAGNFNMNVWTYDAGNNKLR), 232–275 (GPAK…AGTK), 320–359 (AHNDKINGMAFPNEYSEVFATCGTGFIRLWHLTTCRELLR), 362–401 (VPNLECFCIAFTTDGSAILSGWSDGKIRAFGPQSGKIIFT), 405–444 (AHQKAVTAIASTADSSRILSGGEEGMVRVWRIGRTSQTLE), 449–488 (DHKGPVNCIRIKGSGDECVSASSDGSCILWDLHTFKRRTS), 490–529 (FANTFFKSVVYHPDESQLVTAGTDRKVTYWDAYDGNAIRI), 533–572 (SDLDEVNALAVDRDGEALVSGGGDKLVKLWGYDEGHCYFV), and 575–614 (AHSGAITAVGVTPDKQRIVSVGTEGGIFIWDYQRPQTLAD).

This sequence belongs to the CFAP52 family.

The protein localises to the cytoplasm. Its subcellular location is the cell projection. It localises to the cilium. The protein resides in the flagellum. Functionally, may play a role in cell growth and/or survival. The protein is Cilia- and flagella-associated protein 52 of Chlamydomonas reinhardtii (Chlamydomonas smithii).